We begin with the raw amino-acid sequence, 168 residues long: Phosphopantetheine adenylyltransferase (168 aa).

Residue Thr9 participates in substrate binding. ATP is bound by residues Thr9–Phe10 and His17. The substrate site is built by Lys41, Leu73, and Arg87. ATP-binding positions include Gly88–Arg90, Glu98, and Tyr123–Thr129.

Belongs to the bacterial CoaD family. As to quaternary structure, homohexamer. Requires Mg(2+) as cofactor.

The protein resides in the cytoplasm. It catalyses the reaction (R)-4'-phosphopantetheine + ATP + H(+) = 3'-dephospho-CoA + diphosphate. Its pathway is cofactor biosynthesis; coenzyme A biosynthesis; CoA from (R)-pantothenate: step 4/5. Functionally, reversibly transfers an adenylyl group from ATP to 4'-phosphopantetheine, yielding dephospho-CoA (dPCoA) and pyrophosphate. This Paraburkholderia phymatum (strain DSM 17167 / CIP 108236 / LMG 21445 / STM815) (Burkholderia phymatum) protein is Phosphopantetheine adenylyltransferase.